The chain runs to 894 residues: DNA mismatch repair protein MutS (894 aa).

Position 607–614 (607–614) interacts with ATP; it reads GPNMSGKS.

This sequence belongs to the DNA mismatch repair MutS family.

In terms of biological role, this protein is involved in the repair of mismatches in DNA. It is possible that it carries out the mismatch recognition step. This protein has a weak ATPase activity. The chain is DNA mismatch repair protein MutS from Bacillus cereus (strain ZK / E33L).